The chain runs to 341 residues: Anthranilate phosphoribosyltransferase (341 aa).

5-phospho-alpha-D-ribose 1-diphosphate-binding positions include Gly81, 84–85, Thr89, 91–94, 109–117, and Ser121; these read GD, NIST, and KHGSRSVSG. Gly81 serves as a coordination point for anthranilate. Residue Ser93 coordinates Mg(2+). Residue Arg167 coordinates anthranilate. Mg(2+) contacts are provided by Asp226 and Glu227.

This sequence belongs to the anthranilate phosphoribosyltransferase family. As to quaternary structure, homodimer. Requires Mg(2+) as cofactor.

The catalysed reaction is N-(5-phospho-beta-D-ribosyl)anthranilate + diphosphate = 5-phospho-alpha-D-ribose 1-diphosphate + anthranilate. It participates in amino-acid biosynthesis; L-tryptophan biosynthesis; L-tryptophan from chorismate: step 2/5. Its function is as follows. Catalyzes the transfer of the phosphoribosyl group of 5-phosphorylribose-1-pyrophosphate (PRPP) to anthranilate to yield N-(5'-phosphoribosyl)-anthranilate (PRA). The sequence is that of Anthranilate phosphoribosyltransferase from Methylococcus capsulatus (strain ATCC 33009 / NCIMB 11132 / Bath).